Here is a 577-residue protein sequence, read N- to C-terminus: Zinc finger-containing ubiquitin peptidase 1 (577 aa).

The C2H2-type 1 zinc finger occupies 2–24 (LSCDICGETVTSEPDRKAHLIVH). The segment at 29–52 (IICPFCKLSGINYNEMCFHIETAH) adopts a C2H2-type 2; atypical zinc-finger fold. 2 C2H2-type zinc fingers span residues 153-176 (PECP…KTKH) and 192-214 (YDCP…VDLH). The MIU stretch occupies residues 225–247 (DRVQCSSDRELAHQLQQEEERKR). The segment covering 231–261 (SDRELAHQLQQEEERKRKSEESRQEREEFQK) has biased composition (basic and acidic residues). Positions 231-262 (SDRELAHQLQQEEERKRKSEESRQEREEFQKL) are disordered. Positions 248–273 (KSEESRQEREEFQKLQRQYGLDNSGG) are zUBD/ZHA. The residue at position 261 (Lys261) is an N6-acetyllysine. The active-site Nucleophile is the Cys359. Catalysis depends on His490, which acts as the Proton acceptor. Asp511 is an active-site residue.

Belongs to the peptidase C78 family. ZUFSP subfamily. In terms of assembly, interacts with RPA1 and RPA2.

The protein resides in the cytoplasm. The protein localises to the nucleus. The catalysed reaction is Thiol-dependent hydrolysis of ester, thioester, amide, peptide and isopeptide bonds formed by the C-terminal Gly of ubiquitin (a 76-residue protein attached to proteins as an intracellular targeting signal).. Deubiquitinase with endodeubiquitinase activity that specifically interacts with and cleaves 'Lys-63'-linked long polyubiquitin chains. Shows only weak activity against 'Lys-11' and 'Lys-48'-linked chains. Plays an important role in genome stability pathways, functioning to prevent spontaneous DNA damage and also promote cellular survival in response to exogenous DNA damage. Modulates the ubiquitination status of replication protein A (RPA) complex proteins in response to replication stress. In Rattus norvegicus (Rat), this protein is Zinc finger-containing ubiquitin peptidase 1.